A 201-amino-acid polypeptide reads, in one-letter code: Ribosome maturation factor RimP (201 aa).

The disordered stretch occupies residues 180–201 (LRRGSAPAQDEEGEDEAPGAPL). The span at 188 to 201 (QDEEGEDEAPGAPL) shows a compositional bias: acidic residues.

This sequence belongs to the RimP family.

The protein localises to the cytoplasm. Required for maturation of 30S ribosomal subunits. The protein is Ribosome maturation factor RimP of Methylobacterium sp. (strain 4-46).